An 83-amino-acid chain; its full sequence is Small ribosomal subunit protein bS16 (83 aa).

The protein belongs to the bacterial ribosomal protein bS16 family.

In Acidovorax ebreus (strain TPSY) (Diaphorobacter sp. (strain TPSY)), this protein is Small ribosomal subunit protein bS16.